Here is a 158-residue protein sequence, read N- to C-terminus: Small ribosomal subunit protein uS7 (158 aa).

The protein belongs to the universal ribosomal protein uS7 family. Part of the 30S ribosomal subunit. Contacts proteins S9 and S11.

Its function is as follows. One of the primary rRNA binding proteins, it binds directly to 16S rRNA where it nucleates assembly of the head domain of the 30S subunit. Is located at the subunit interface close to the decoding center, probably blocks exit of the E-site tRNA. This is Small ribosomal subunit protein uS7 from Christiangramia forsetii (strain DSM 17595 / CGMCC 1.15422 / KT0803) (Gramella forsetii).